The primary structure comprises 686 residues: Cation channel sperm-associated protein 1 (686 aa).

Basic and acidic residues predominate over residues 1–15 (MDQSSRRDESYHETH). Disordered regions lie at residues 1-57 (MDQS…QQPY), 97-177 (TLPN…NRDH), 207-271 (DHHH…KSTA), and 289-318 (QSRE…RAHK). The Cytoplasmic segment spans residues 1–351 (MDQSSRRDES…QMILSLTQSL (351 aa)). A compositionally biased stretch (basic residues) spans 25–35 (SHPHPHPHPTL). Residues 128–142 (DPNHHPHQDDPHRPS) are compositionally biased toward basic and acidic residues. Residues 147-160 (HPSSTGSHQGTTHQ) show a composition bias toward polar residues. Composition is skewed to basic residues over residues 211–229 (EGHH…KEQR) and 235–244 (HMHHHIHHRS). Positions 245 to 271 (PSASQLSHKSHSTLATSPSHVGSKSTA) are enriched in polar residues. Positions 308-318 (QKRKKAQRAHK) are enriched in basic residues. The helical transmembrane segment at 352–373 (GFETFIFIVVCLNTVILVAQTF) threads the bilayer. Residues 374 to 382 (TELEIRGEW) lie on the Extracellular side of the membrane. Residues 383-404 (YFMVLDSIFLSIYVLEAVLKLI) traverse the membrane as a helical segment. Residues 405–412 (ALGLEYFY) are Cytoplasmic-facing. The chain crosses the membrane as a helical span at residues 413-435 (DPWNNLDFFIMVMAVLDFVLLQI). Residues 436–446 (NSLSYSFYNHS) are Extracellular-facing. Residues 447–469 (LFRILKVFKSMRALRAIRVLRRL) traverse the membrane as a helical segment. The Cytoplasmic portion of the chain corresponds to 470-487 (SILTSLHEVAGTLSGSLP). The helical transmembrane segment at 488 to 510 (SITAILTLMFTCLFLFSVVLRAL) threads the bilayer. Residues 511–521 (FQDSDPKRFQN) are Extracellular-facing. The segment at residues 522 to 534 (IFTTLFTLFTMLT) is an intramembrane region (helical; Pore-forming). Residues 535-551 (LDDWSLIYIDNRAQGAW) lie on the Extracellular side of the membrane. Residues 552-577 (YIIPILMIYIVIQYFIFLNLVIAVLV) form a helical membrane-spanning segment. The Cytoplasmic segment spans residues 578 to 686 (DNFQMALLKG…FEAGDDDYGK (109 aa)).

It belongs to the cation channel sperm-associated (TC 1.A.1.19) family. Component of the CatSper complex or CatSpermasome composed of the core pore-forming members CATSPER1, CATSPER2, CATSPER3 and CATSPER4 as well as auxiliary members CATSPERB, CATSPERG2, CATSPERD, CATSPERE, CATSPERZ, C2CD6/CATSPERT, SLCO6C1, TMEM249, TMEM262 and EFCAB9. HSPA1 may be an additional auxiliary complex member. The core complex members CATSPER1, CATSPER2, CATSPER3 and CATSPER4 form a heterotetrameric channel. The auxiliary CATSPERB, CATSPERG2, CATSPERD and CATSPERE subunits form a pavilion-like structure over the pore which stabilizes the complex through interactions with CATSPER4, CATSPER3, CATSPER1 and CATSPER2 respectively. SLCO6C1 interacts with CATSPERE, and TMEM262/CATSPERH interacts with CATSPERB, further stabilizing the complex. C2CD6/CATSPERT interacts at least with CATSPERD and is required for targeting the CatSper complex in the flagellar membrane. Interacts with Ca(v)3.3/CACNA1I, leading to suppression of T-type calcium channel activity. In terms of tissue distribution, testis-specific.

The protein localises to the cell projection. Its subcellular location is the cilium. The protein resides in the flagellum membrane. The catalysed reaction is Ca(2+)(in) = Ca(2+)(out). With respect to regulation, activated by intracellular alkalinization. In contrast to the human ortholog, not activated by progesterone. Functionally, pore-forming subunit of the CatSper complex, a sperm-specific voltage-gated calcium channel that plays a central role in sperm cell hyperactivation. Controls calcium entry to mediate the hyperactivated motility, a step needed for sperm motility which is essential late in the preparation of sperm for fertilization. The polypeptide is Cation channel sperm-associated protein 1 (Catsper1) (Mus musculus (Mouse)).